Consider the following 830-residue polypeptide: DNA gyrase subunit A (830 aa).

Positions 34 to 514 (LPDVRDGLKP…NHSDINMEDL (481 aa)) constitute a Topo IIA-type catalytic domain. Tyrosine 122 functions as the O-(5'-phospho-DNA)-tyrosine intermediate in the catalytic mechanism. A GyrA-box motif is present at residues 541–547 (QRRGGKG).

The protein belongs to the type II topoisomerase GyrA/ParC subunit family. Heterotetramer, composed of two GyrA and two GyrB chains. In the heterotetramer, GyrA contains the active site tyrosine that forms a transient covalent intermediate with DNA, while GyrB binds cofactors and catalyzes ATP hydrolysis.

It is found in the cytoplasm. The enzyme catalyses ATP-dependent breakage, passage and rejoining of double-stranded DNA.. A type II topoisomerase that negatively supercoils closed circular double-stranded (ds) DNA in an ATP-dependent manner to modulate DNA topology and maintain chromosomes in an underwound state. Negative supercoiling favors strand separation, and DNA replication, transcription, recombination and repair, all of which involve strand separation. Also able to catalyze the interconversion of other topological isomers of dsDNA rings, including catenanes and knotted rings. Type II topoisomerases break and join 2 DNA strands simultaneously in an ATP-dependent manner. This chain is DNA gyrase subunit A, found in Buchnera aphidicola subsp. Acyrthosiphon pisum (strain APS) (Acyrthosiphon pisum symbiotic bacterium).